The following is a 125-amino-acid chain: Small ribosomal subunit protein uS12 (125 aa).

At D89 the chain carries 3-methylthioaspartic acid.

The protein belongs to the universal ribosomal protein uS12 family. Part of the 30S ribosomal subunit. Contacts proteins S8 and S17. May interact with IF1 in the 30S initiation complex.

Its function is as follows. With S4 and S5 plays an important role in translational accuracy. In terms of biological role, interacts with and stabilizes bases of the 16S rRNA that are involved in tRNA selection in the A site and with the mRNA backbone. Located at the interface of the 30S and 50S subunits, it traverses the body of the 30S subunit contacting proteins on the other side and probably holding the rRNA structure together. The combined cluster of proteins S8, S12 and S17 appears to hold together the shoulder and platform of the 30S subunit. In Bordetella petrii (strain ATCC BAA-461 / DSM 12804 / CCUG 43448), this protein is Small ribosomal subunit protein uS12.